The chain runs to 528 residues: Arginine--tRNA ligase (528 aa).

The 'HIGH' region signature appears at 112 to 122 (ANPTGPLHIGH).

Belongs to the class-I aminoacyl-tRNA synthetase family. As to quaternary structure, monomer.

It localises to the cytoplasm. The enzyme catalyses tRNA(Arg) + L-arginine + ATP = L-arginyl-tRNA(Arg) + AMP + diphosphate. This is Arginine--tRNA ligase from Wolinella succinogenes (strain ATCC 29543 / DSM 1740 / CCUG 13145 / JCM 31913 / LMG 7466 / NCTC 11488 / FDC 602W) (Vibrio succinogenes).